A 714-amino-acid polypeptide reads, in one-letter code: Fatty acid oxidation complex subunit alpha (714 aa).

Residues 1-190 (MDTVSAFKLE…KAGLVDEVVP (190 aa)) form an enoyl-CoA hydratase region. The 3-hydroxyacyl-CoA dehydrogenase stretch occupies residues 306–714 (GPLTSIAVLG…TFWPADERLT (409 aa)).

In the N-terminal section; belongs to the enoyl-CoA hydratase/isomerase family. This sequence in the central section; belongs to the 3-hydroxyacyl-CoA dehydrogenase family. As to quaternary structure, heterotetramer of two alpha chains (FadJ) and two beta chains (FadI).

It localises to the cytoplasm. The enzyme catalyses a (3S)-3-hydroxyacyl-CoA = a (2E)-enoyl-CoA + H2O. It carries out the reaction a 4-saturated-(3S)-3-hydroxyacyl-CoA = a (3E)-enoyl-CoA + H2O. The catalysed reaction is a (3S)-3-hydroxyacyl-CoA + NAD(+) = a 3-oxoacyl-CoA + NADH + H(+). It catalyses the reaction (3S)-3-hydroxybutanoyl-CoA = (3R)-3-hydroxybutanoyl-CoA. It functions in the pathway lipid metabolism; fatty acid beta-oxidation. Functionally, catalyzes the formation of a hydroxyacyl-CoA by addition of water on enoyl-CoA. Also exhibits 3-hydroxyacyl-CoA epimerase and 3-hydroxyacyl-CoA dehydrogenase activities. The protein is Fatty acid oxidation complex subunit alpha of Klebsiella pneumoniae (strain 342).